The following is a 358-amino-acid chain: MQKNDDLLRERRKDEHVALGVKQNEQLAPSSLEDIQLIGTSIPRYNVKDIDLTTTIVGTNVPFPFYINAMTGGSRHTKKINAELAEIAREVAIPMAVGSQSAALKNSSLIDTYKIVREINPNGMILANISPEVALQEGLRAIEMLEADALQIHINPAQELVMQEGDRSFSHWLTRIEKYVKLSPVPVVVKEVGFGMTRETVATLASVGVQSVDLAGKGGTNFAQIENDRRRDQAYDFLLDWGISTGQALIDMQHQDAPKIAYLASGGIRNPLDIVKALALGADSVGMAGQIIYSLKKEGLTKTIEKLELWKEQLRSLFVLADAKNISELKTTPLIISGELAKWGTLREIDLVKLANRK.

12–13 (RK) contacts substrate. FMN-binding positions include 69–71 (AMT), S99, and N128. Q158 is a binding site for substrate. A Mg(2+)-binding site is contributed by E159. FMN contacts are provided by residues K190, T220, 267–269 (GIR), and 288–289 (AG).

Belongs to the IPP isomerase type 2 family. As to quaternary structure, homooctamer. Dimer of tetramers. Requires FMN as cofactor. NADPH is required as a cofactor. It depends on Mg(2+) as a cofactor.

It is found in the cytoplasm. It catalyses the reaction isopentenyl diphosphate = dimethylallyl diphosphate. In terms of biological role, involved in the biosynthesis of isoprenoids. Catalyzes the 1,3-allylic rearrangement of the homoallylic substrate isopentenyl (IPP) to its allylic isomer, dimethylallyl diphosphate (DMAPP). The sequence is that of Isopentenyl-diphosphate delta-isomerase from Listeria monocytogenes serotype 4a (strain HCC23).